The sequence spans 1102 residues: MPKRTDIQSVLVIGSGPIVIGQAAEFDYSGTQACRILRAEGLRVILVNSNPATIMTDPEIADATYVEPITPEFVEKIIAKERPDALLPTLGGQTALNTAISMHEQGVLEKYGVELIGANVEAINKGEDRDLFKGVVEAVRAKIGHGESARSVICHSMDDVLEGVETLGGYPVVVRPSFTMGGAGSGFAHDEEELRRIAGQGLTLSPTTEVLLEESILGWKEYELELMRDKNDNVVVVCSIENFDPMGVHTGDSITVAPSMTLTDREYQRLRDIGIAIIREVGVDTGGCNIQFAVNPDDGRIIVIEMNPRVSRSSALASKATGFPIAKIAAKLAVGYTLDEIPNDITEKTPASFEPTLDYVVVKAPRFAFEKFPSADSTLTTTMKSVGEAMAIGRNFTEALQKALRSLEKKGSQFTFVGEPGDKALLLEEAVRPTDGRINSVMQAIRAGATPEEVFEATKIDPWFVDQLFLIKELADELAAADKLDPELLAEAKRHGFSDVQIAEIRGLREDVVREVRHALGVRPVYKTVDTCAAEFAAKTPYFYSSYDEESEVAPREKPAVIILGSGPNRIGQGIEFDYSCVHASFALSEAGYETVMVNCNPETVSTDYDTSDRLYFEPLTLEDVLEIVHAETLAGPVAGVIVQLGGQTPLGLSQALKDNGVPVVGTPPEAIHAAEDRGAFGQVLAEAGLPAPKHGTATTFAGAKAIADEIGYPVLVRPSYVLGGRGMEIVYDETRLESYIAESTEISPSRPVLVDRFLDDAIEIDVDALYDGEELYLGGVMEHIEEAGIHSGDSACALPPITLGGFDIKRLRASTEAIAKGVGVRGLINIQFAMAGDILYVLEANPRASRTVPFTSKATAVPLAKAAARISLGATIAELRAERLLPANGDGGTLPLDAPISVKEAVMPWSRFRDIHGRGVDTVLGPEMRSTGEVMGIDSVFGTAYAKSQAGAYGPLPTKGRAFISVANRDKRSMIFPARELVAHGFELLATSGTAEVLKRNGINATVVRKQSEGEGPGGEKTIVQLIHDGQVDLIVNTPYGTGGRLDGYEIRTAAVARSVPCLTTVQALAAAVQGIDALTHGDVGVRSLQEHAEHLTAARD.

Residues 1–408 (MPKRTDIQSV…ALQKALRSLE (408 aa)) are carboxyphosphate synthetic domain. Arg129, Arg175, Gly181, Gly182, Glu214, Ile216, Glu221, Gly247, Val248, His249, Gln291, and Glu305 together coordinate ATP. The ATP-grasp 1 domain occupies 138–334 (AVRAKIGHGE…IAKIAAKLAV (197 aa)). 3 residues coordinate Mg(2+): Gln291, Glu305, and Asn307. Residues Gln291, Glu305, and Asn307 each contribute to the Mn(2+) site. An oligomerization domain region spans residues 409–551 (KKGSQFTFVG…YFYSSYDEES (143 aa)). The segment at 552–954 (EVAPREKPAV…AYAKSQAGAY (403 aa)) is carbamoyl phosphate synthetic domain. The 192-residue stretch at 682–873 (GQVLAEAGLP…LAKAAARISL (192 aa)) folds into the ATP-grasp 2 domain. Positions 718, 757, 759, 764, 789, 790, 791, 792, 832, and 844 each coordinate ATP. The Mg(2+) site is built by Gln832, Glu844, and Asn846. Mn(2+) contacts are provided by Gln832, Glu844, and Asn846. In terms of domain architecture, MGS-like spans 955–1100 (GPLPTKGRAF…QEHAEHLTAA (146 aa)). Residues 955 to 1102 (GPLPTKGRAF…HAEHLTAARD (148 aa)) form an allosteric domain region.

It belongs to the CarB family. As to quaternary structure, composed of two chains; the small (or glutamine) chain promotes the hydrolysis of glutamine to ammonia, which is used by the large (or ammonia) chain to synthesize carbamoyl phosphate. Tetramer of heterodimers (alpha,beta)4. Mg(2+) serves as cofactor. Requires Mn(2+) as cofactor.

It catalyses the reaction hydrogencarbonate + L-glutamine + 2 ATP + H2O = carbamoyl phosphate + L-glutamate + 2 ADP + phosphate + 2 H(+). The enzyme catalyses hydrogencarbonate + NH4(+) + 2 ATP = carbamoyl phosphate + 2 ADP + phosphate + 2 H(+). Its pathway is amino-acid biosynthesis; L-arginine biosynthesis; carbamoyl phosphate from bicarbonate: step 1/1. The protein operates within pyrimidine metabolism; UMP biosynthesis via de novo pathway; (S)-dihydroorotate from bicarbonate: step 1/3. Functionally, large subunit of the glutamine-dependent carbamoyl phosphate synthetase (CPSase). CPSase catalyzes the formation of carbamoyl phosphate from the ammonia moiety of glutamine, carbonate, and phosphate donated by ATP, constituting the first step of 2 biosynthetic pathways, one leading to arginine and/or urea and the other to pyrimidine nucleotides. The large subunit (synthetase) binds the substrates ammonia (free or transferred from glutamine from the small subunit), hydrogencarbonate and ATP and carries out an ATP-coupled ligase reaction, activating hydrogencarbonate by forming carboxy phosphate which reacts with ammonia to form carbamoyl phosphate. The protein is Carbamoyl phosphate synthase large chain of Streptomyces avermitilis (strain ATCC 31267 / DSM 46492 / JCM 5070 / NBRC 14893 / NCIMB 12804 / NRRL 8165 / MA-4680).